The chain runs to 411 residues: Imidazolonepropionase (411 aa).

Histidine 78 and histidine 80 together coordinate Fe(3+). Positions 78 and 80 each coordinate Zn(2+). Residues arginine 87, tyrosine 150, and histidine 183 each contribute to the 4-imidazolone-5-propanoate site. Tyrosine 150 contacts N-formimidoyl-L-glutamate. Residue histidine 248 coordinates Fe(3+). Histidine 248 is a binding site for Zn(2+). A 4-imidazolone-5-propanoate-binding site is contributed by glutamine 251. Aspartate 322 is a binding site for Fe(3+). Residue aspartate 322 participates in Zn(2+) binding. The N-formimidoyl-L-glutamate site is built by asparagine 324 and glycine 326. Position 327 (serine 327) interacts with 4-imidazolone-5-propanoate.

Belongs to the metallo-dependent hydrolases superfamily. HutI family. Zn(2+) serves as cofactor. Fe(3+) is required as a cofactor.

The protein localises to the cytoplasm. The enzyme catalyses 4-imidazolone-5-propanoate + H2O = N-formimidoyl-L-glutamate. It participates in amino-acid degradation; L-histidine degradation into L-glutamate; N-formimidoyl-L-glutamate from L-histidine: step 3/3. Its function is as follows. Catalyzes the hydrolytic cleavage of the carbon-nitrogen bond in imidazolone-5-propanoate to yield N-formimidoyl-L-glutamate. It is the third step in the universal histidine degradation pathway. The sequence is that of Imidazolonepropionase from Flavobacterium johnsoniae (strain ATCC 17061 / DSM 2064 / JCM 8514 / BCRC 14874 / CCUG 350202 / NBRC 14942 / NCIMB 11054 / UW101) (Cytophaga johnsonae).